The primary structure comprises 344 residues: Phenylalanine--tRNA ligase alpha subunit (344 aa).

E256 lines the Mg(2+) pocket.

It belongs to the class-II aminoacyl-tRNA synthetase family. Phe-tRNA synthetase alpha subunit type 1 subfamily. In terms of assembly, tetramer of two alpha and two beta subunits. Mg(2+) serves as cofactor.

Its subcellular location is the cytoplasm. It carries out the reaction tRNA(Phe) + L-phenylalanine + ATP = L-phenylalanyl-tRNA(Phe) + AMP + diphosphate + H(+). This Anoxybacillus flavithermus (strain DSM 21510 / WK1) protein is Phenylalanine--tRNA ligase alpha subunit.